The primary structure comprises 678 residues: uncharacterized protein (678 aa).

2 helical membrane passes run 14–34 (LMFAGAGPGPMLAAASAWTGL) and 180–200 (GAVIIAGFPFLDLGNVTIGGF).

The protein belongs to the mycobacterial PPE family.

Its subcellular location is the cell membrane. This is an uncharacterized protein from Mycobacterium tuberculosis (strain CDC 1551 / Oshkosh).